The sequence spans 285 residues: DNA repair protein RecO (285 aa).

Belongs to the RecO family.

Its function is as follows. Involved in DNA repair and RecF pathway recombination. This Synechococcus sp. (strain JA-2-3B'a(2-13)) (Cyanobacteria bacterium Yellowstone B-Prime) protein is DNA repair protein RecO.